Here is a 364-residue protein sequence, read N- to C-terminus: Aminomethyltransferase (364 aa).

It belongs to the GcvT family. In terms of assembly, the glycine cleavage system is composed of four proteins: P, T, L and H.

It catalyses the reaction N(6)-[(R)-S(8)-aminomethyldihydrolipoyl]-L-lysyl-[protein] + (6S)-5,6,7,8-tetrahydrofolate = N(6)-[(R)-dihydrolipoyl]-L-lysyl-[protein] + (6R)-5,10-methylene-5,6,7,8-tetrahydrofolate + NH4(+). Functionally, the glycine cleavage system catalyzes the degradation of glycine. This chain is Aminomethyltransferase, found in Shigella flexneri.